Reading from the N-terminus, the 776-residue chain is General transcription and DNA repair factor IIH helicase subunit XPD (776 aa).

In terms of domain architecture, Helicase ATP-binding spans 7–277 (DLLVYFPYSY…KKVDEKRLKD (271 aa)). Residue 42 to 49 (MPSGTGKT) coordinates ATP. [4Fe-4S] cluster-binding residues include Cys115, Cys133, Cys150, and Cys184. A DEAH box motif is present at residues 228–231 (DEAH). Residues 736 to 776 (HVEKQSTSKPPQQQNSAINSTITTSTTTTTTTSTISETHLT) are disordered. Positions 742 to 754 (TSKPPQQQNSAIN) are enriched in polar residues. Positions 755-776 (STITTSTTTTTTTSTISETHLT) are enriched in low complexity.

Belongs to the helicase family. RAD3/XPD subfamily. In terms of assembly, component of the 7-subunit TFIIH core complex composed of XPB/repB, XPD/repD, gtf2h1, gtf2h2, gtf2h3, gtf2h4 and gtf2h5, which is active in NER. The core complex associates with the 3-subunit CDK-activating kinase (CAK) module composed of cycH/cyclin H, cdk7 and mnat1 to form the 10-subunit holoenzyme (holo-TFIIH) active in transcription. The cofactor is Mg(2+). [4Fe-4S] cluster is required as a cofactor.

Its subcellular location is the nucleus. It carries out the reaction Couples ATP hydrolysis with the unwinding of duplex DNA at the replication fork by translocating in the 5'-3' direction. This creates two antiparallel DNA single strands (ssDNA). The leading ssDNA polymer is the template for DNA polymerase III holoenzyme which synthesizes a continuous strand.. It catalyses the reaction ATP + H2O = ADP + phosphate + H(+). Its function is as follows. ATP-dependent 5'-3' DNA helicase, component of the general transcription and DNA repair factor IIH (TFIIH) core complex, which is involved in general and transcription-coupled nucleotide excision repair (NER) of damaged DNA and, when complexed to CDK-activating kinase (CAK), in transcription by RNA polymerase II. In NER, TFIIH acts by opening DNA around the lesion to allow the excision of the damaged oligonucleotide and its replacement by a new DNA fragment. The ATP-dependent helicase activity of XPD/repD is required for DNA opening. In transcription, TFIIH has an essential role in transcription initiation. When the pre-initiation complex (PIC) has been established, TFIIH is required for promoter opening and promoter escape. Phosphorylation of the C-terminal tail (CTD) of the largest subunit of RNA polymerase II by the kinase module CAK controls the initiation of transcription. XPD/repD acts by forming a bridge between CAK and the core-TFIIH complex. The sequence is that of General transcription and DNA repair factor IIH helicase subunit XPD from Dictyostelium discoideum (Social amoeba).